The following is a 529-amino-acid chain: 2-(3-amino-3-carboxypropyl)histidine synthase subunit 2-2 (529 aa).

The [4Fe-4S] cluster site is built by Cys-130, Cys-151, and Cys-366.

It belongs to the DPH1/DPH2 family. DPH2 subfamily. Component of the 2-(3-amino-3-carboxypropyl)histidine synthase complex composed of DPH1, DPH2, DPH3 and a NADH-dependent reductase, predominantly CBR1. [4Fe-4S] cluster is required as a cofactor.

Its subcellular location is the cytoplasm. Its pathway is protein modification; peptidyl-diphthamide biosynthesis. Required for the first step of diphthamide biosynthesis, a post-translational modification of histidine which occurs in elongation factor 2. DPH1 and DPH2 transfer a 3-amino-3-carboxypropyl (ACP) group from S-adenosyl-L-methionine (SAM) to a histidine residue, the reaction is assisted by a reduction system comprising DPH3 and a NADH-dependent reductase, predominantly CBR1. Facilitates the reduction of the catalytic iron-sulfur cluster found in the DPH1 subunit. In Candida albicans (strain SC5314 / ATCC MYA-2876) (Yeast), this protein is 2-(3-amino-3-carboxypropyl)histidine synthase subunit 2-2.